A 440-amino-acid polypeptide reads, in one-letter code: Ribosomal protein uS12 methylthiotransferase RimO (440 aa).

Residues 7–117 form the MTTase N-terminal domain; sequence PKISFVSLGC…VLDAVHRALP (111 aa). Positions 16, 52, 81, 148, 152, and 155 each coordinate [4Fe-4S] cluster. In terms of domain architecture, Radical SAM core spans 134–370; that stretch reads LTPRHYAYLK…MARQQKISAQ (237 aa). Positions 373-439 constitute a TRAM domain; the sequence is KRKVGTRQQV…EYDLHGSVAG (67 aa).

The protein belongs to the methylthiotransferase family. RimO subfamily. The cofactor is [4Fe-4S] cluster.

Its subcellular location is the cytoplasm. It catalyses the reaction L-aspartate(89)-[ribosomal protein uS12]-hydrogen + (sulfur carrier)-SH + AH2 + 2 S-adenosyl-L-methionine = 3-methylsulfanyl-L-aspartate(89)-[ribosomal protein uS12]-hydrogen + (sulfur carrier)-H + 5'-deoxyadenosine + L-methionine + A + S-adenosyl-L-homocysteine + 2 H(+). Catalyzes the methylthiolation of an aspartic acid residue of ribosomal protein uS12. The protein is Ribosomal protein uS12 methylthiotransferase RimO of Afipia carboxidovorans (strain ATCC 49405 / DSM 1227 / KCTC 32145 / OM5) (Oligotropha carboxidovorans).